We begin with the raw amino-acid sequence, 203 residues long: MNEFTLNAEQRSDLGKGASRRLRRLASLVPAVVYGGDKAPESISMLAKEVAKLLENDAAYSHIIELNVGGQKQNVIIKALQRHPAKGHVMHADFVRVIAGQKLTAIVPIHFLNEEAPVKKGGEISHTTTELEVTCLPKDLPEFIEVDLGALEVGDNVHLSELKAPKGVEFVALAHGTDLAIANVHAPRIVKDEAEEGEEGAAE.

The protein belongs to the bacterial ribosomal protein bL25 family. CTC subfamily. Part of the 50S ribosomal subunit; part of the 5S rRNA/L5/L18/L25 subcomplex. Contacts the 5S rRNA. Binds to the 5S rRNA independently of L5 and L18.

This is one of the proteins that binds to the 5S RNA in the ribosome where it forms part of the central protuberance. The polypeptide is Large ribosomal subunit protein bL25 (Pseudomonas savastanoi pv. phaseolicola (strain 1448A / Race 6) (Pseudomonas syringae pv. phaseolicola (strain 1448A / Race 6))).